We begin with the raw amino-acid sequence, 341 residues long: Protein-glutamate methylesterase/protein-glutamine glutaminase 2 (341 aa).

In terms of domain architecture, Response regulatory spans 7–120 (KTLIVDDSLL…NRDLDSFFSE (114 aa)). Asp58 carries the 4-aspartylphosphate modification. The 187-residue stretch at 155 to 341 (VIAIGASTGG…QALYKLINQL (187 aa)) folds into the CheB-type methylesterase domain. Catalysis depends on residues Ser161, His187, and Asp283.

Belongs to the CheB family. In terms of processing, phosphorylated by CheA. Phosphorylation of the N-terminal regulatory domain activates the methylesterase activity.

It localises to the cytoplasm. The catalysed reaction is [protein]-L-glutamate 5-O-methyl ester + H2O = L-glutamyl-[protein] + methanol + H(+). It carries out the reaction L-glutaminyl-[protein] + H2O = L-glutamyl-[protein] + NH4(+). Its function is as follows. Involved in chemotaxis. Part of a chemotaxis signal transduction system that modulates chemotaxis in response to various stimuli. Catalyzes the demethylation of specific methylglutamate residues introduced into the chemoreceptors (methyl-accepting chemotaxis proteins or MCP) by CheR. Also mediates the irreversible deamidation of specific glutamine residues to glutamic acid. The polypeptide is Protein-glutamate methylesterase/protein-glutamine glutaminase 2 (Syntrophomonas wolfei subsp. wolfei (strain DSM 2245B / Goettingen)).